The sequence spans 592 residues: Ferric-chelate reductase 1 (592 aa).

Residues 2–22 form a helical membrane-spanning segment; it reads AAPQITLSVLVIALLTCSVTA. Positions 13-179 constitute a Reelin domain; that stretch reads IALLTCSVTA…FTTPKATTQP (167 aa). N-linked (GlcNAc...) asparagine glycans are attached at residues Asn85, Asn308, Asn321, and Asn353. Residues 216-331 enclose the DOMON domain; it reads EPACVFLSFT…ESYYIFFAEG (116 aa). Positions 335 to 534 constitute a Cytochrome b561 domain; it reads DGRIFRHSQQ…IGTEVILEIH (200 aa). Residues 372–392 traverse the membrane as a helical segment; it reads AHGALMFVAWMTTVSIGVLVA. Residues His373 and His414 each contribute to the heme b site. The next 5 membrane-spanning stretches (helical) occupy residues 415 to 435, 446 to 466, 477 to 499, 515 to 535, and 569 to 589; these read RMLM…PFVY, HPYL…LATF, VFNW…AMFL, YAMM…EIHA, and VVLA…LSAI. Residues His446 and His482 each coordinate heme b.

The protein belongs to the FRRS1 family. The cofactor is heme b. As to expression, expressed in spleen, liver and kidney with low expression in brain. Localizes in adult brain to the choroid plexus of the fourth, third, and lateral ventricles and to ependymal cells that line the ventricles.

It localises to the membrane. Functionally, ferric-chelate reductases reduce Fe(3+) to Fe(2+) before its transport from the endosome to the cytoplasm. This is Ferric-chelate reductase 1 (FRRS1) from Mus musculus (Mouse).